Consider the following 245-residue polypeptide: Putative insertion sequence ATP-binding protein y4pL (245 aa).

Position 106 to 113 (106 to 113) interacts with ATP; sequence GPSGVGKS.

The protein belongs to the IS21/IS1162 putative ATP-binding protein family.

The protein is Putative insertion sequence ATP-binding protein y4pL of Sinorhizobium fredii (strain NBRC 101917 / NGR234).